We begin with the raw amino-acid sequence, 141 residues long: 3-hydroxyacyl-[acyl-carrier-protein] dehydratase FabZ (141 aa).

The active site involves histidine 47.

This sequence belongs to the thioester dehydratase family. FabZ subfamily.

The protein localises to the cytoplasm. The catalysed reaction is a (3R)-hydroxyacyl-[ACP] = a (2E)-enoyl-[ACP] + H2O. Its function is as follows. Involved in unsaturated fatty acids biosynthesis. Catalyzes the dehydration of short chain beta-hydroxyacyl-ACPs and long chain saturated and unsaturated beta-hydroxyacyl-ACPs. In Caldanaerobacter subterraneus subsp. tengcongensis (strain DSM 15242 / JCM 11007 / NBRC 100824 / MB4) (Thermoanaerobacter tengcongensis), this protein is 3-hydroxyacyl-[acyl-carrier-protein] dehydratase FabZ.